The chain runs to 489 residues: Ketol-acid reductoisomerase (NADP(+)) (489 aa).

One can recognise a KARI N-terminal Rossmann domain in the interval 16-207 (IKKCRFMEKK…GGHRAGVLES (192 aa)). Residues 44 to 47 (CGSQ), arginine 67, serine 77, and 107 to 109 (DKQ) each bind NADP(+). Histidine 131 is an active-site residue. Glycine 157 is an NADP(+) binding site. 2 consecutive KARI C-terminal knotted domains span residues 208–343 (SFVA…QSPD) and 344–483 (YDKK…MKNM). Mg(2+)-binding residues include aspartate 216, glutamate 220, glutamate 388, and glutamate 392. Residue serine 413 participates in substrate binding.

The protein belongs to the ketol-acid reductoisomerase family. Mg(2+) is required as a cofactor.

The enzyme catalyses (2R)-2,3-dihydroxy-3-methylbutanoate + NADP(+) = (2S)-2-acetolactate + NADPH + H(+). It catalyses the reaction (2R,3R)-2,3-dihydroxy-3-methylpentanoate + NADP(+) = (S)-2-ethyl-2-hydroxy-3-oxobutanoate + NADPH + H(+). It functions in the pathway amino-acid biosynthesis; L-isoleucine biosynthesis; L-isoleucine from 2-oxobutanoate: step 2/4. The protein operates within amino-acid biosynthesis; L-valine biosynthesis; L-valine from pyruvate: step 2/4. Functionally, involved in the biosynthesis of branched-chain amino acids (BCAA). Catalyzes an alkyl-migration followed by a ketol-acid reduction of (S)-2-acetolactate (S2AL) to yield (R)-2,3-dihydroxy-isovalerate. In the isomerase reaction, S2AL is rearranged via a Mg-dependent methyl migration to produce 3-hydroxy-3-methyl-2-ketobutyrate (HMKB). In the reductase reaction, this 2-ketoacid undergoes a metal-dependent reduction by NADPH to yield (R)-2,3-dihydroxy-isovalerate. The chain is Ketol-acid reductoisomerase (NADP(+)) from Buchnera aphidicola subsp. Diuraphis noxia.